We begin with the raw amino-acid sequence, 158 residues long: uncharacterized protein (158 aa).

The HTH hxlR-type domain occupies 13–110 (ESVGRALELV…WGDEYLPRPE (98 aa)).

This is an uncharacterized protein from Mycobacterium tuberculosis (strain ATCC 25618 / H37Rv).